We begin with the raw amino-acid sequence, 1233 residues long: MSKERPKRNIIQKEYDDSDGIPWSEERVVRKVLYLSLKEFKNAQKRQHGDGISGSLKAVNGLLTNGQSKGLESEQLENEKDDASQVSSTSNDISSSDFEEGPSRKRPRLQAQRKFAQSQPNSPSTTPIKIVEPLLPPPATQISDLSKRKPKTEDFLTFLCLRGSPALPSNMVYFGSSQDDEDEEEEEEETEDTKTATNNASSSCQSTPRKGKTHKQVPNGQVFNGSSKSLKEKEPAQKHKSKEATPGKEKNSEHKAESRKDQAAANHHPTTNTGSSTKGLTANNHHTLHRSAQDLRKQVSKVNGITRMSSPSANAASAKKMRDVRPSPSKTVKYTATVTKGTVTYTKAKKELVKETKLNHHKPSSPVNHTISGKLESSNAKTRKQVLSLGASKSNNTAVNGVKVNGKLNQKTCTKEVGRQLREGLRNSKRRLEETNHIDKIQSPTKRMKGAVNLAEAASKKAVVEKPLLNGHLKKEVPEKNLERNRPKRATAGKSTPGKQAHGKTENASCENRSTSQAESLHKPQDSMGKHEKGSSKSGWGMLGEIPILRPSTKEFHDPLIYIESVRAQVEKYGMCRVIPPPDWRPECKLNDEMRFVTQIQHIHKLGRRWGPNVQRLACIKKHLKSQGITMDELPLIGGCELDLACFVQLINEMGGMQQVTDLKKWNKLADMLRIPKTAQDRLAKLQEAYCQYLLSYDSLSPEEHKKLEKEVLLEKEILEKRKGPLEGHSENAYKFHSLPRFEPKNGLINGVVHKNGFRNKLKEVDVPLKTGRRRLFAQEKETTKDDEEEEEEGVLSDLHKCIYKGRSVSLTTFYRTARNIMNMCFTKEPTVAEVEQEYWRLVEQKDSHVAVHCGKVDTNTHGSGFPVGKSEPFSRHGWNLTVLPNNTGSILRHLGAVPGVTIPWLNIGMVFSTSCWSRDQNHLPYIDYLHTGADCIWYCIPAAEENKLDDVVHTLLQANGTPGLEMLESNVMISPEILCKEGIRVHRTVQQSGQFVVCFPGSFVSKVCCGYSVSETVHFATTQWTSMGFKTAKEMKRRRIAKPFSMEKLLYQIATAEAKKENGPTLSTISSLLGELRDTELRQRRQLYEAGLHSSARYGSHDSSSTAMDGKKKPRKWLQLETSERRCQICQHLCYLSMVVQENENVVFCLECALRHVEKQKSCRGLKMMYRYDEEQIISLVNQICGKVSGKNGSIENCISKPTPKRGPRKRATVDVPSSRLSSSSSSKSASS.

Positions M1–I10 are enriched in basic residues. Disordered stretches follow at residues M1–P22, N65–R148, P165–T335, E355–N379, E423–A451, and K466–M542. Residues S84–S96 are compositionally biased toward low complexity. The Nuclear localization signal signature appears at P102–R108. A compositionally biased stretch (polar residues) spans F115–P127. The interval A139–P168 is sufficient for interaction with the PRC2 complex. A compositionally biased stretch (acidic residues) spans Q178–E191. 2 stretches are compositionally biased toward polar residues: residues T195 to P208 and Q216 to K228. Basic and acidic residues predominate over residues S229–Q262. Residues H268–H285 are compositionally biased toward polar residues. Positions S309–A318 are enriched in low complexity. Polar residues predominate over residues S365–N379. 2 stretches are compositionally biased toward basic and acidic residues: residues E423–K440 and L473–N485. Residues E506 to E519 are compositionally biased toward polar residues. Over residues S520–S535 the composition is skewed to basic and acidic residues. In terms of domain architecture, JmjN spans I546–E587. In terms of domain architecture, ARID spans W610–P702. Residues G863 to P867 carry the GSGFP motif motif. Positions P873–K1037 constitute a JmjC domain. The segment at E1197–S1233 is disordered. Residues S1219–S1233 are compositionally biased toward low complexity.

This sequence belongs to the JARID2 family. Associates with the PRC2 complex.

It localises to the nucleus. In terms of biological role, regulator of histone methyltransferase complexes that plays an essential role in embryonic development, including heart and liver development, neural tube fusion process and hematopoiesis. Acts as an accessory subunit for the core PRC2 (Polycomb repressive complex 2) complex, which mediates histone H3K27 (H3K27me3) trimethylation on chromatin. Binds DNA and mediates the recruitment of the PRC2 complex to target genes in embryonic stem cells, thereby playing a key role in stem cell differentiation and normal embryonic development. In cardiac cells, it is required to repress expression of cyclin-D1 (CCND1) by activating methylation of 'Lys-9' of histone H3 (H3K9me) by the GLP1/EHMT1 and G9a/EHMT2 histone methyltransferases. Also acts as a transcriptional repressor of ANF via its interaction with GATA4 and NKX2-5. Participates in the negative regulation of cell proliferation signaling. Does not have histone demethylase activity. The chain is Protein Jumonji (JARID2) from Gallus gallus (Chicken).